We begin with the raw amino-acid sequence, 124 residues long: Probable 5-hydroxyisourate hydrolase (124 aa).

The substrate site is built by histidine 16, arginine 57, and tyrosine 121.

This sequence belongs to the transthyretin family. 5-hydroxyisourate hydrolase subfamily. In terms of assembly, homotetramer.

It catalyses the reaction 5-hydroxyisourate + H2O = 5-hydroxy-2-oxo-4-ureido-2,5-dihydro-1H-imidazole-5-carboxylate + H(+). Catalyzes the hydrolysis of 5-hydroxyisourate (HIU) to 2-oxo-4-hydroxy-4-carboxy-5-ureidoimidazoline (OHCU). The chain is Probable 5-hydroxyisourate hydrolase from Schizosaccharomyces pombe (strain 972 / ATCC 24843) (Fission yeast).